Reading from the N-terminus, the 331-residue chain is Probable serine hydrolase (331 aa).

Residues 1 to 28 (MGQTRVAATTAAQSPAAELSPETNGQTE) are disordered. The span at 7 to 17 (AATTAAQSPAA) shows a compositional bias: low complexity. Positions 63–163 (PIIALHGWQD…EVEKLINIDI (101 aa)) constitute an AB hydrolase-1 domain. Residue S138 is part of the active site.

The protein belongs to the AB hydrolase superfamily. As to expression, ubiquitously expressed before embryonic stage 11. At stage 11, expression is concentrated in the foregut and posterior midgut. By stage 15, in gastric caeca, pharynx, posterior spiracles and anterior edge of midgut. At the end of embryogenesis, expression is confined to gastric caeca. During third instar larvae, expressed at low levels in gastric caeca, midgut and hindgut and high level in fat body.

Functionally, may have a role in detoxification and digestion during embryogenesis and larval development. This Drosophila melanogaster (Fruit fly) protein is Probable serine hydrolase (kraken).